The primary structure comprises 162 residues: Ciliary microtubule inner protein 5 (162 aa).

A disordered region spans residues 1–44 (MGSHPTPGLQRTTSAGYRLPPTRPPASVSPAARGGPMASRGLAG).

The protein resides in the cell projection. It localises to the cilium. This Homo sapiens (Human) protein is Ciliary microtubule inner protein 5.